The chain runs to 428 residues: PGL/p-HBAD biosynthesis glycosyltransferase MRA_2985 (428 aa).

The tract at residues 1 to 23 is disordered; the sequence is MEETSVAGDPGPDAGTSTAPNAA.

The protein belongs to the UDP-glycosyltransferase family.

In terms of biological role, involved in glycosylation steps downstream of mono-O-methyl-glycosyl-p-hydroxybenzoic acid derivative (p-HBAD I) and 2-O-methyl-rhamnosyl-phenolphthiocerol dimycocerosate (mycoside B) during the p-hydroxybenzoic acid derivatives (p-HBAD) and glycosylated phenolphthiocerol dimycocerosates (PGL) biosynthesis. This is PGL/p-HBAD biosynthesis glycosyltransferase MRA_2985 from Mycobacterium tuberculosis (strain ATCC 25177 / H37Ra).